The chain runs to 393 residues: Stimulated by retinoic acid gene 8 protein (393 aa).

Over residues 1 to 11 the composition is skewed to polar residues; that stretch reads MATPGEGNQPS. The tract at residues 1-25 is disordered; the sequence is MATPGEGNQPSDDGAPQPLAQLQKL. A Nuclear localization signal (NLS) motif is present at residues 28–33; sequence RVVRRR. A coiled-coil region spans residues 66 to 95; the sequence is QVLNRTKIHIQEQEESLDKLLKLKASFNLQ. The disordered stretch occupies residues 124-201; it reads FLQDSPPEWF…EEKKVDLSHS (78 aa). Residues 141–192 show a composition bias toward acidic residues; the sequence is DAEEEGEEEGEEEGEEGEEEEEGDEEGEEEEENGEEREVEEYQEEEEEEEEE. A Nuclear export signal (NES) motif is present at residues 209–218; the sequence is LMEFERYLNF.

Interacts with XPO1. Interacts with MEIOSIN. In terms of processing, phosphorylated in P19 EC cells. In terms of tissue distribution, expressed exclusively in premeiotic germ cells in both sexes. In females, is expressed in the embryonic ovary. In males, is expressed in pubertal and adult testes, in premeiotic spermatogenic cells. Expressed by some type A and B spermatogonia, preleptotene spermatocytes, and early leptotene spermatocytes (at protein level). Expression begins in late undifferentiated spermatogonia and persists during differentiating spermatogonia (at protein level).

The protein localises to the cytoplasm. The protein resides in the nucleus. Functionally, meiosis-inducer required for the transition into meiosis for both female and male germ cells. In female germ cells, acts downstream of ZGLP1 as a key effector of the meiotic program: required for premeiotic DNA replication and subsequent events in meiotic prophase. During spermatogenesis, next to its role in meiotic initiation, promotes (but is not required for) spermatogonial differentiation. In complex with MEIOSIN, directly activates the transcription of a subset of critical meiotic genes playing a central role in cell-cycle switching from mitosis to meiosis. The polypeptide is Stimulated by retinoic acid gene 8 protein (Mus musculus (Mouse)).